Consider the following 479-residue polypeptide: Phosphatidylinositol 4-kinase type 2-beta (479 aa).

Acidic residues predominate over residues 1-10 (MESGSEEPDE). The tract at residues 1 to 91 (MESGSEEPDE…PRVGAGHTGH (91 aa)) is disordered. Positions 18-34 (PALHAGPPAGRAAPGGA) are enriched in low complexity. The segment covering 42 to 62 (GLEEEEEGEEDSGPEGDGEEE) has biased composition (acidic residues). A PI3K/PI4K catalytic domain is found at 118-449 (GVLPERISQG…VQMPRVIVER (332 aa)). Positions 124–130 (ISQGSSG) are G-loop. ATP contacts are provided by serine 131 and lysine 146. The tract at residues 151–153 (EPY) is important for substrate binding. Positions 159–172 (KWTKYFHKICCPCC) are important for interaction with membranes. ATP contacts are provided by residues 255-258 (QLFV) and 269-270 (RK). Residues 262–270 (KEADYWLRK) are important for interaction with membranes. Positions 299-307 (RNTDRGNDN) are catalytic loop. The activation loop stretch occupies residues 340 to 360 (AIDNGLAFPFKHPDEWRAYPF). An ATP-binding site is contributed by aspartate 342. The interval 355–364 (WRAYPFHWAW) is important for interaction with membranes.

Belongs to the PI3/PI4-kinase family. Type II PI4K subfamily.

The protein resides in the cytoplasm. The protein localises to the cytosol. It localises to the golgi apparatus membrane. It is found in the endoplasmic reticulum membrane. Its subcellular location is the cell membrane. The protein resides in the early endosome membrane. The enzyme catalyses a 1,2-diacyl-sn-glycero-3-phospho-(1D-myo-inositol) + ATP = a 1,2-diacyl-sn-glycero-3-phospho-(1D-myo-inositol 4-phosphate) + ADP + H(+). Contributes to the overall PI4-kinase activity of the cell. This contribution may be especially significant in plasma membrane, endosomal and Golgi compartments. The phosphorylation of phosphatidylinositol (PI) to PI4P is the first committed step in the generation of phosphatidylinositol 4,5-bisphosphate (PIP2), a precursor of the second messenger inositol 1,4,5-trisphosphate (InsP3). This Gallus gallus (Chicken) protein is Phosphatidylinositol 4-kinase type 2-beta (PI4K2B).